A 550-amino-acid chain; its full sequence is Dihydroxy-acid dehydratase (550 aa).

Asp-78 is a Mg(2+) binding site. Cys-119 contributes to the [2Fe-2S] cluster binding site. The Mg(2+) site is built by Asp-120 and Lys-121. Lys-121 carries the post-translational modification N6-carboxylysine. Residue Cys-191 coordinates [2Fe-2S] cluster. Mg(2+) is bound at residue Glu-440. The Proton acceptor role is filled by Ser-466.

Belongs to the IlvD/Edd family. As to quaternary structure, homodimer. [2Fe-2S] cluster is required as a cofactor. It depends on Mg(2+) as a cofactor.

It carries out the reaction (2R)-2,3-dihydroxy-3-methylbutanoate = 3-methyl-2-oxobutanoate + H2O. The catalysed reaction is (2R,3R)-2,3-dihydroxy-3-methylpentanoate = (S)-3-methyl-2-oxopentanoate + H2O. Its pathway is amino-acid biosynthesis; L-isoleucine biosynthesis; L-isoleucine from 2-oxobutanoate: step 3/4. The protein operates within amino-acid biosynthesis; L-valine biosynthesis; L-valine from pyruvate: step 3/4. In terms of biological role, functions in the biosynthesis of branched-chain amino acids. Catalyzes the dehydration of (2R,3R)-2,3-dihydroxy-3-methylpentanoate (2,3-dihydroxy-3-methylvalerate) into 2-oxo-3-methylpentanoate (2-oxo-3-methylvalerate) and of (2R)-2,3-dihydroxy-3-methylbutanoate (2,3-dihydroxyisovalerate) into 2-oxo-3-methylbutanoate (2-oxoisovalerate), the penultimate precursor to L-isoleucine and L-valine, respectively. The chain is Dihydroxy-acid dehydratase from Methanococcus maripaludis (strain C7 / ATCC BAA-1331).